The following is a 262-amino-acid chain: 2-aminoethylphosphonate dioxygenase (262 aa).

Lysine 108 serves as a coordination point for 2-oxoglutarate. The Fe cation site is built by histidine 118, aspartate 120, and histidine 198.

It belongs to the PhyH family. Requires Fe(2+) as cofactor.

The catalysed reaction is (2-aminoethyl)phosphonate + 2-oxoglutarate + O2 = (1R)-(2-amino-1-hydroxyethyl)phosphonate + succinate + CO2. With respect to regulation, activity is enhanced by ascorbate. Functionally, involved in the degradation of the organophosphonate 2-aminoethylphosphonic acid (2-AEP). Catalyzes the hydroxylation of 2-aminoethylphosphonic acid to yield (2-amino-1-hydroxyethyl)phosphonic acid. The sequence is that of 2-aminoethylphosphonate dioxygenase from Uncultured bacterium HF130_AEPn_1.